Consider the following 389-residue polypeptide: Geodin cluster transcriptional coactivator gedD (389 aa).

The region spanning L13–L83 is the HTH iclR-type domain. The H-T-H motif DNA-binding region spans V43–R62.

Its subcellular location is the nucleus. Its function is as follows. Transcriptional coactivator; part of the gene cluster that mediates the biosynthesis of geodin, an intermediate in the biosynthesis of other natural products. With gedR, coregulates the production of geodin. This Aspergillus terreus (strain NIH 2624 / FGSC A1156) protein is Geodin cluster transcriptional coactivator gedD (gedD).